The following is an 87-amino-acid chain: Large ribosomal subunit protein bL27 (87 aa).

This sequence belongs to the bacterial ribosomal protein bL27 family.

The protein is Large ribosomal subunit protein bL27 of Paenarthrobacter aurescens (strain TC1).